A 459-amino-acid chain; its full sequence is Zinc finger chaperone zpr1 (459 aa).

C4-type zinc fingers lie at residues 38–70 (CMEC…CPHC) and 259–291 (CPSC…CDRC).

This sequence belongs to the ZPR1 family.

It is found in the cytoplasm. Its subcellular location is the nucleus. Acts as a protein folding chaperone for elongation factor 1-alpha. The protein is Zinc finger chaperone zpr1 of Schizosaccharomyces pombe (strain 972 / ATCC 24843) (Fission yeast).